We begin with the raw amino-acid sequence, 259 residues long: 5'-nucleotidase SurE (259 aa).

Residues aspartate 8, aspartate 9, serine 40, and asparagine 95 each coordinate a divalent metal cation.

The protein belongs to the SurE nucleotidase family. Requires a divalent metal cation as cofactor.

It is found in the cytoplasm. The enzyme catalyses a ribonucleoside 5'-phosphate + H2O = a ribonucleoside + phosphate. Functionally, nucleotidase that shows phosphatase activity on nucleoside 5'-monophosphates. This is 5'-nucleotidase SurE from Oleidesulfovibrio alaskensis (strain ATCC BAA-1058 / DSM 17464 / G20) (Desulfovibrio alaskensis).